Reading from the N-terminus, the 1226-residue chain is Probable DNA-binding protein SNT1 (1226 aa).

Disordered stretches follow at residues 1-219 and 264-331; these read MGYP…YSRS and LKST…PDNI. A compositionally biased stretch (basic residues) spans 11–27; the sequence is GDKKRYHYSNNPNRRHP. A compositionally biased stretch (polar residues) spans 31 to 64; the sequence is YSKNSFPKSSNNGFVSSPTADNSTNPSVTPSTAS. 2 stretches are compositionally biased toward low complexity: residues 81-103 and 116-131; these read PRPS…SSTR and SSST…NTST. Composition is skewed to polar residues over residues 132–143 and 150–170; these read ITHTNTDIGNSR and SRYN…SALS. Serine 187 is subject to Phosphoserine. Low complexity predominate over residues 202–211; that stretch reads NNVSSVNNNS. A compositionally biased stretch (polar residues) spans 264–275; that stretch reads LKSTHSQSSPSL. Residues 280–304 show a composition bias toward basic and acidic residues; the sequence is FHDANKLDKPEASVKVETPSKDETK. At serine 395 the chain carries Phosphoserine. The stretch at 539-591 forms a coiled coil; the sequence is DLQKKYEKECEILTKLSENLRKEEIENKRKEHELMEQKRREEGIETEKEKSLR. The segment covering 569–590 has biased composition (basic and acidic residues); sequence EHELMEQKRREEGIETEKEKSL. The interval 569-605 is disordered; that stretch reads EHELMEQKRREEGIETEKEKSLRHPSSSSSSRRRNRA. An SANT domain is found at 668-720; it reads DASDNFTDHEHSLFLEGYLIHPKKFGKISHYMGGLRSPEECVLHYYRTKKTVN. Basic residues predominate over residues 732 to 745; it reads RKMSAAAKRRKRKE. Positions 732-796 are disordered; sequence RKMSAAAKRR…SEVKGDPLGT (65 aa). Acidic residues predominate over residues 748-758; that stretch reads NDEEVEVDESK. Residues 759 to 773 show a composition bias toward basic and acidic residues; it reads EESTNTIEKEEKSEN. Threonine 796 is modified (phosphothreonine). One can recognise an HTH myb-type domain in the interval 884 to 938; sequence APEHKTSYWSVRESQLFPELLKEFGSQWSLISEKLGTKSTTMVRNYYQRNAARNG. A DNA-binding region (H-T-H motif) is located at residues 911-934; that stretch reads WSLISEKLGTKSTTMVRNYYQRNA. Serine 1037 is subject to Phosphoserine. The segment at 1172–1194 is disordered; sequence SQGTPTFPLPAPRTSPISRAPPK.

In terms of assembly, identified in a Set3C complex with SET3, HST1, HOS2, SIF2, CPR1 and HOS4.

The protein localises to the nucleus. In terms of biological role, part of the Set3C complex, which is required to repress early/middle sporulation genes during meiosis. This is Probable DNA-binding protein SNT1 (SNT1) from Saccharomyces cerevisiae (strain ATCC 204508 / S288c) (Baker's yeast).